A 325-amino-acid chain; its full sequence is uncharacterized protein (325 aa).

Positions 37–85 (EKPTYTPAKPVKKAPSVVQPRRVSRTLRSSESVHTNHGPERVFESPTPA) are disordered. Residue Ser52 is modified to Phosphoserine. Over residues 62-71 (TLRSSESVHT) the composition is skewed to polar residues. An FCP1 homology domain is found at 153 to 311 (EDEGKKCLIL…IDLIPFLEHL (159 aa)).

This is an uncharacterized protein from Schizosaccharomyces pombe (strain 972 / ATCC 24843) (Fission yeast).